The sequence spans 503 residues: Probable cytosol aminopeptidase (503 aa).

2 residues coordinate Mn(2+): Lys-274 and Asp-279. The active site involves Lys-286. The Mn(2+) site is built by Asp-297, Asp-356, and Glu-358. Residue Arg-360 is part of the active site.

It belongs to the peptidase M17 family. Mn(2+) serves as cofactor.

The protein resides in the cytoplasm. The enzyme catalyses Release of an N-terminal amino acid, Xaa-|-Yaa-, in which Xaa is preferably Leu, but may be other amino acids including Pro although not Arg or Lys, and Yaa may be Pro. Amino acid amides and methyl esters are also readily hydrolyzed, but rates on arylamides are exceedingly low.. It catalyses the reaction Release of an N-terminal amino acid, preferentially leucine, but not glutamic or aspartic acids.. In terms of biological role, presumably involved in the processing and regular turnover of intracellular proteins. Catalyzes the removal of unsubstituted N-terminal amino acids from various peptides. This chain is Probable cytosol aminopeptidase, found in Burkholderia orbicola (strain AU 1054).